Consider the following 652-residue polypeptide: Proline-rich receptor-like protein kinase PERK1 (652 aa).

The interval 1 to 137 (MSTAPSPGTT…PPSDSSDGLS (137 aa)) is disordered. Over 1–139 (MSTAPSPGTT…SDSSDGLSTG (139 aa)) the chain is Extracellular. Over residues 8-19 (GTTPSPSPPSPP) the composition is skewed to pro residues. N-linked (GlcNAc...) asparagine glycosylation is found at Asn21 and Asn50. Pro residues predominate over residues 26–112 (TPPPAASSPP…PSPNQGPPNT (87 aa)). The segment covering 113–137 (PSGSTPRTPSNTKPSPPSDSSDGLS) has biased composition (low complexity). A helical membrane pass occupies residues 140-160 (VVVGIAIGGVAILVILTLICL). Topologically, residues 161-652 (LCKKKRRRRH…TGQGYSGPSL (492 aa)) are cytoplasmic. Positions 169-251 (RHDDEAAYYV…GGSDYSDLPV (83 aa)) are disordered. Polar residues predominate over residues 203 to 213 (NASRPSDNHVV). Residues 216 to 236 (LPPPKPPSPPRKPPPPPPPPA) show a composition bias toward pro residues. Position 269 is a phosphothreonine (Thr269). Positions 280–559 (FSEANLLGQG…VRALEGNVSL (280 aa)) constitute a Protein kinase domain. Residues 286–294 (LGQGGFGYV) and Lys308 each bind ATP. Tyr353 bears the Phosphotyrosine mark. The active-site Proton acceptor is the Asp404. A phosphoserine mark is found at Ser408 and Ser437. Residues Thr438 and Thr443 each carry the phosphothreonine modification. Tyr451 carries the post-translational modification Phosphotyrosine. The span at 605 to 616 (YGTTGEYSNPTS) shows a compositional bias: polar residues. The interval 605–652 (YGTTGEYSNPTSDYGLYPSGSSSEGQATREMEMGKIKKTGQGYSGPSL) is disordered.

This sequence belongs to the protein kinase superfamily. Ser/Thr protein kinase family. Mostly expressed in inflorescence bolt, flower buds and siliques, and, to a lower extent, in roots, seedlings and leaves.

Its subcellular location is the cell membrane. It carries out the reaction L-seryl-[protein] + ATP = O-phospho-L-seryl-[protein] + ADP + H(+). It catalyses the reaction L-threonyl-[protein] + ATP = O-phospho-L-threonyl-[protein] + ADP + H(+). The chain is Proline-rich receptor-like protein kinase PERK1 (PERK1) from Arabidopsis thaliana (Mouse-ear cress).